The sequence spans 768 residues: GPI inositol-deacylase (768 aa).

Residues 35 to 55 (FLSRLFCALAVLFSYSIYQSF) traverse the membrane as a helical segment. Ser-206 is an active-site residue. 4 N-linked (GlcNAc...) asparagine glycosylation sites follow: Asn-291, Asn-336, Asn-374, and Asn-448. 6 consecutive transmembrane segments (helical) span residues 604–624 (MPICIVLLLLGATIQSQLPDF), 642–662 (LVGILGVWTFGLLCVVSFHLI), 663–683 (STCAIFTTLLIPFKILHVAIW), 700–720 (NFYYAIPPALLVKCASCGGTI), 725–745 (VCLKACRIALIILIMSSFSVG), and 748–768 (WTWILSPIANAVLILFVASII).

It belongs to the GPI inositol-deacylase family.

The protein localises to the endoplasmic reticulum membrane. Its function is as follows. Involved in inositol deacylation of GPI-anchored proteins which plays important roles in the quality control and ER-associated degradation of GPI-anchored proteins. The protein is GPI inositol-deacylase (BST1) of Cryptococcus neoformans var. neoformans serotype D (strain B-3501A) (Filobasidiella neoformans).